The primary structure comprises 223 residues: Urease accessory protein UreF (223 aa).

Belongs to the UreF family. UreD, UreF and UreG form a complex that acts as a GTP-hydrolysis-dependent molecular chaperone, activating the urease apoprotein by helping to assemble the nickel containing metallocenter of UreC. The UreE protein probably delivers the nickel.

Its subcellular location is the cytoplasm. Its function is as follows. Required for maturation of urease via the functional incorporation of the urease nickel metallocenter. In Rhizobium etli (strain CIAT 652), this protein is Urease accessory protein UreF.